Here is a 1013-residue protein sequence, read N- to C-terminus: Poly [ADP-ribose] polymerase 1 (1013 aa).

2 consecutive PARP-type zinc fingers follow at residues 10-92 (YKAE…ESGG) and 113-203 (FAVE…PAVK). Positions 22, 25, 54, 57, 125, 128, 159, and 162 each coordinate Zn(2+). The disordered stretch occupies residues 202 to 228 (VKSEGKRKADEVDGGVSKKQKKEDEKL). Positions 207-209 (KRK) match the Nuclear localization signal motif. The PADR1 zinc-binding domain occupies 219–353 (KKQKKEDEKL…FKRQDRVFPK (135 aa)). The segment at 284-326 (GSLKPCETCKGQLVFKSDAYYCTGDISAWTKCVFKTQTPDRKD) is zinc ribbon. Cysteine 289, cysteine 292, cysteine 305, and cysteine 315 together coordinate Zn(2+). A disordered region spans residues 353–385 (KDAPPAAATPSSGSTTSAATSVSSASKNLTEAP). Low complexity predominate over residues 356–378 (PPAAATPSSGSTTSAATSVSSAS). An automodification domain region spans residues 365 to 523 (GSTTSAATSV…EGGSKSKKMK (159 aa)). A BRCT domain is found at 385-461 (PADKPLTGMK…RVVADDFLTD (77 aa)). PolyADP-ribosyl glutamic acid is present on residues glutamate 413, glutamate 435, glutamate 444, glutamate 445, glutamate 464, glutamate 471, glutamate 484, and glutamate 488. Over residues 494-507 (AATKSTGAHSSKST) the composition is skewed to low complexity. The tract at residues 494-522 (AATKSTGAHSSKSTGKVKEEEGGSKSKKM) is disordered. PolyADP-ribosyl glutamic acid occurs at positions 512 and 513. In terms of domain architecture, WGR spans 541-637 (CAHVLEQNGK…SNFTKYPNKF (97 aa)). One can recognise a PARP alpha-helical domain in the interval 661 to 778 (KSQLEKPVQD…DIEVAYSLLR (118 aa)). The 227-residue stretch at 787-1013 (DPIDINYEKL…IRFNYQTSLW (227 aa)) folds into the PARP catalytic domain. Residues 861–863 (HGS), glycine 870, arginine 877, and serine 903 each bind NAD(+). Glutamate 987 serves as the catalytic For poly [ADP-ribose] polymerase activity.

The protein belongs to the ARTD/PARP family. As to quaternary structure, homodimer; PARP-type zinc-fingers from separate parp1 molecules form a dimer module that specifically recognizes DNA strand breaks. Post-translationally, poly-ADP-ribosylated on serine, glutamate and aspartate residues by autocatalysis. Auto-ADP-ribosylation on serine takes place following interaction with HPF1. Auto poly-ADP-ribosylation on serine residues promotes its dissociation from chromatin.

Its subcellular location is the chromosome. The protein localises to the nucleus. It is found in the nucleolus. The protein resides in the cytoplasm. It localises to the cytosol. It carries out the reaction NAD(+) + (ADP-D-ribosyl)n-acceptor = nicotinamide + (ADP-D-ribosyl)n+1-acceptor + H(+).. The catalysed reaction is L-seryl-[protein] + NAD(+) = O-(ADP-D-ribosyl)-L-seryl-[protein] + nicotinamide + H(+). The enzyme catalyses L-aspartyl-[protein] + NAD(+) = 4-O-(ADP-D-ribosyl)-L-aspartyl-[protein] + nicotinamide. It catalyses the reaction L-glutamyl-[protein] + NAD(+) = 5-O-(ADP-D-ribosyl)-L-glutamyl-[protein] + nicotinamide. It carries out the reaction L-tyrosyl-[protein] + NAD(+) = O-(ADP-D-ribosyl)-L-tyrosyl-[protein] + nicotinamide + H(+). The catalysed reaction is L-histidyl-[protein] + NAD(+) = N(tele)-(ADP-D-ribosyl)-L-histidyl-[protein] + nicotinamide + H(+). ADP-ribosyltransferase activity is regulated via an allosteric activation mechanism. In absence of activation signal, parp1 is autoinhibited by the PARP alpha-helical domain (also named HD region), which prevents effective NAD(+)-binding. Activity is highly stimulated by signals, such as DNA strand breaks. Binding to damaged DNA unfolds the PARP alpha-helical domain, relieving autoinhibition. Poly-ADP-ribosyltransferase activity is tightly regulated and parp1 is removed from damaged chromatin following initial poly-ADP-ribosylation of chromatin to avoid prolonged residence (trapping) that has cytotoxic consequences. A number of factors or post-translational modifications (auto-poly-ADP-ribosylation) promote parp1 removal from chromatin. Its function is as follows. Poly-ADP-ribosyltransferase that mediates poly-ADP-ribosylation of proteins and plays a key role in DNA repair. Mediates glutamate, aspartate, serine, histidine or tyrosine ADP-ribosylation of proteins: the ADP-D-ribosyl group of NAD(+) is transferred to the acceptor carboxyl group of target residues and further ADP-ribosyl groups are transferred to the 2'-position of the terminal adenosine moiety, building up a polymer with an average chain length of 20-30 units. Serine ADP-ribosylation of proteins constitutes the primary form of ADP-ribosylation of proteins in response to DNA damage. Specificity for the different amino acids is conferred by interacting factors, such as hpf1 and nmnat1. Following interaction with hpf1, catalyzes serine ADP-ribosylation of target proteins; hpf1 confers serine specificity by completing the parp1 active site. Also catalyzes tyrosine ADP-ribosylation of target proteins following interaction with hpf1. Following interaction with nmnat1, catalyzes glutamate and aspartate ADP-ribosylation of target proteins; nmnat1 confers glutamate and aspartate specificity. Parp1 initiates the repair of DNA breaks: recognizes and binds DNA breaks within chromatin and recruits hpf1, licensing serine ADP-ribosylation of target proteins, such as histones (H2BS6ADPr and H3S10ADPr), thereby promoting decompaction of chromatin and the recruitment of repair factors leading to the reparation of DNA strand breaks. In addition to base excision repair (BER) pathway, also involved in double-strand breaks (DSBs) repair. Mediates the poly-ADP-ribosylation of a number of proteins. In addition to proteins, also able to ADP-ribosylate DNA: catalyzes ADP-ribosylation of DNA strand break termini containing terminal phosphates and a 2'-OH group in single- and double-stranded DNA, respectively. Parp1-mediated DNA repair in neurons plays a role in sleep: senses DNA damage in neurons and promotes sleep, facilitating efficient DNA repair. In addition to DNA repair, also involved in other processes, such as transcription regulation, programmed cell death, membrane repair, adipogenesis and innate immunity. Acts as a repressor of transcription: binds to nucleosomes and modulates chromatin structure in a manner similar to histone H1, thereby altering RNA polymerase II. Acts both as a positive and negative regulator of transcription elongation, depending on the context. Poly-ADP-ribose chains generated by parp1 also play a role in poly-ADP-ribose-dependent cell death, a process named parthanatos. Also acts as a negative regulator of the cGAS-STING pathway by mediating poly-ADP-ribosylation and inactivation of cgas. Acts as a negative regulator of adipogenesis by catalyzing poly ADP-ribosylation of histone H2B on 'Glu-35' (H2BE35ADPr). This chain is Poly [ADP-ribose] polymerase 1, found in Danio rerio (Zebrafish).